The chain runs to 213 residues: Large ribosomal subunit protein uL1 (213 aa).

Belongs to the universal ribosomal protein uL1 family. Part of the 50S ribosomal subunit.

Functionally, binds directly to 23S rRNA. Probably involved in E site tRNA release. In terms of biological role, protein L1 is also a translational repressor protein, it controls the translation of its operon by binding to its mRNA. The polypeptide is Large ribosomal subunit protein uL1 (Methanosarcina acetivorans (strain ATCC 35395 / DSM 2834 / JCM 12185 / C2A)).